We begin with the raw amino-acid sequence, 605 residues long: MLFCKNCGSQNNEGAKFCKQCGTPIGGGSKQANQETASTAETRQAPRKPIPKKTIILWSSIAAACVILFAAYKTGAYFTSKDRLVDKFEQAVNDGDQDQIATLLTPVNDNLKLTKNNVKPFLTYLKDHPDKKDELFASLRDETAQKDIVYAEKDGKSLLVFDHYDLKVAPVYFEVSSNYKNTDLYVNKEEAGSVKKADQAQTLGPYIPGEYTVSAKLKNDVVDLVKKEDIQAIGDSSFRVDLSLEADDVTFSLANDIKSGKGDLLINGKSIHKDPFKSVTYGPLLTDGSMTASVEAEFPWGKTKTAGVPIDDKEMELTLIPDQDTQEQIMNTIVKTTKQYSKALSDGNTAQMTEASANWKAETKDTVDSMKSADSYLKDRYLETDFDLDTFALSQKNDGTWQVSVTGKELHQSSSYNDYTKSEMTDDSPSYEYLLSYDKKQKKWIFEDAESTFESAGTNIKKIKNDKPETYTSAWAGSKNKGSESSASGDVTDEQVTLFMGSYLQSQADAVNQNNFSLMEDSLEKGSSLYSDQQHLVSKLNKEGTTEDFNNYEVKSWSQNGSAITIKTYEEFYITKSGGSPKLRTYNWTYTGVVKNGRIYLTSIQ.

Residues 56–78 form a helical membrane-spanning segment; that stretch reads ILWSSIAAACVILFAAYKTGAYF.

Its subcellular location is the cell membrane. This is an uncharacterized protein from Bacillus subtilis (strain 168).